Consider the following 493-residue polypeptide: Glutamyl-tRNA(Gln) amidotransferase subunit A (493 aa).

Residues Lys-79 and Ser-159 each act as charge relay system in the active site. Ser-183 serves as the catalytic Acyl-ester intermediate.

This sequence belongs to the amidase family. GatA subfamily. As to quaternary structure, heterotrimer of A, B and C subunits.

It catalyses the reaction L-glutamyl-tRNA(Gln) + L-glutamine + ATP + H2O = L-glutaminyl-tRNA(Gln) + L-glutamate + ADP + phosphate + H(+). Functionally, allows the formation of correctly charged Gln-tRNA(Gln) through the transamidation of misacylated Glu-tRNA(Gln) in organisms which lack glutaminyl-tRNA synthetase. The reaction takes place in the presence of glutamine and ATP through an activated gamma-phospho-Glu-tRNA(Gln). This chain is Glutamyl-tRNA(Gln) amidotransferase subunit A, found in Brucella anthropi (strain ATCC 49188 / DSM 6882 / CCUG 24695 / JCM 21032 / LMG 3331 / NBRC 15819 / NCTC 12168 / Alc 37) (Ochrobactrum anthropi).